Consider the following 236-residue polypeptide: Small ribosomal subunit protein uS2c (236 aa).

This sequence belongs to the universal ribosomal protein uS2 family.

The protein resides in the plastid. It localises to the chloroplast. In Carica papaya (Papaya), this protein is Small ribosomal subunit protein uS2c (rps2).